We begin with the raw amino-acid sequence, 606 residues long: Melanoma-associated antigen D2 (606 aa).

Disordered regions lie at residues 1–29 (MSDT…MMQT) and 52–204 (SEDV…GGRR). N-acetylserine is present on Ser-2. Residue Ser-5 is modified to Phosphoserine. Thr-72 carries the post-translational modification Phosphothreonine. Residues 79–100 (PATQASSTTQLTDTQVLATENK) are compositionally biased toward polar residues. A compositionally biased stretch (basic and acidic residues) spans 122-131 (ETKKVSHVAD). A compositionally biased stretch (low complexity) spans 142 to 164 (EAAPSQASADEPEPESAAAQSQE). Ser-157 bears the Phosphoserine mark. Basic residues predominate over residues 171-181 (KVKAKKARKVK). 6 positions are modified to phosphoserine: Ser-190, Ser-191, Ser-194, Ser-197, Ser-244, and Ser-247. The span at 248 to 260 (PKARRGKARRRAA) shows a compositional bias: basic residues. Residues 248 to 275 (PKARRGKARRRAAKLQSSQEPEAPPPRD) are disordered. 2 positions are modified to phosphoserine: Ser-264 and Ser-265. In terms of domain architecture, MAGE spans 279–478 (LQGRANDLVK…KEWAAQYREA (200 aa)). The segment at 534–563 (GAEAKAKAQESGSASTGASTSTNNSASASA) is disordered.

As to quaternary structure, interacts with GNAS.

Its function is as follows. Regulates the expression, localization to the plasma membrane and function of the sodium chloride cotransporters SLC12A1 and SLC12A3, two key components of salt reabsorption in the distal renal tubule. The protein is Melanoma-associated antigen D2 (MAGED2) of Pongo abelii (Sumatran orangutan).